The primary structure comprises 1131 residues: Replication factor C subunit 1 (1131 aa).

Disordered stretches follow at residues 14–87 (KKPV…KSEK), 92–111 (YKPG…ETDE), 120–201 (AASK…NDEA), and 225–378 (ARTL…NYQA). Over residues 38 to 54 (GVKEAKVNNSGKEDASK) the composition is skewed to basic and acidic residues. Lys49 participates in a covalent cross-link: Glycyl lysine isopeptide (Lys-Gly) (interchain with G-Cter in SUMO2). Phosphotyrosine is present on Tyr66. Phosphoserine occurs at positions 68, 70, 72, and 107. Position 109 is a phosphothreonine (Thr109). Residues 127-138 (NGVSTNSYLGTS) show a composition bias toward polar residues. Phosphoserine is present on Ser155. A phosphothreonine mark is found at Thr160 and Thr162. Ser163, Ser172, Ser189, Ser244, Ser250, Ser253, Ser281, and Ser309 each carry phosphoserine. Positions 184–201 (KRKESSQNTEDSRLNDEA) are enriched in basic and acidic residues. A compositionally biased stretch (low complexity) spans 308-319 (SSPKASAKLALM). 2 stretches are compositionally biased toward basic and acidic residues: residues 334–350 (AARR…EKTT) and 359–373 (TKRE…EKKR). Residues 354–528 (TKVSPTKRES…KKESESKKCK (175 aa)) form an interferon-stimulated-response-element binding region region. The residue at position 365 (Ser365) is a Phosphoserine. A BRCT domain is found at 399-489 (GAENCLEGLT…PGKRSKYEMA (91 aa)). Positions 491-525 (EAEMKKEKSKLERTPQKNDQGKRKISPAKKESESK) are disordered. Ser535 carries the post-translational modification Phosphoserine. 635–642 (GPPGVGKT) serves as a coordination point for ATP. Residues 1073–1131 (PALDSEYSEEFQEDDTQSEKEQDAVETDAMIKKKTRSSKPSKSEREKESKKGKGKNWKK) form a disordered region. Acidic residues predominate over residues 1078-1088 (EYSEEFQEDDT). Ser1090 carries the post-translational modification Phosphoserine. The Nuclear localization signal signature appears at 1104–1108 (KKKTR). Residues 1113-1123 (SKSEREKESKK) are compositionally biased toward basic and acidic residues.

This sequence belongs to the activator 1 large subunit family. Large subunit of the RFC complex, an heteropentameric complex consisting of RFC1 and four small subunits RFC2, RFC3, RFC4 and RFC5; the RFC complex interacts with PCNA and the interaction involves RFC1.

It localises to the nucleus. Subunit of the replication factor C (RFC) complex which acts during elongation of primed DNA templates by DNA polymerases delta and epsilon, and is necessary for ATP-dependent loading of proliferating cell nuclear antigen (PCNA) onto primed DNA. This subunit binds to the primer-template junction. Binds the PO-B transcription element as well as other GA rich DNA sequences. Can bind single- or double-stranded DNA. The protein is Replication factor C subunit 1 (Rfc1) of Mus musculus (Mouse).